Consider the following 343-residue polypeptide: Ribosomal RNA small subunit methyltransferase C (343 aa).

Belongs to the methyltransferase superfamily. RsmC family. Monomer.

It is found in the cytoplasm. The enzyme catalyses guanosine(1207) in 16S rRNA + S-adenosyl-L-methionine = N(2)-methylguanosine(1207) in 16S rRNA + S-adenosyl-L-homocysteine + H(+). Functionally, specifically methylates the guanine in position 1207 of 16S rRNA in the 30S particle. In Escherichia coli (strain SMS-3-5 / SECEC), this protein is Ribosomal RNA small subunit methyltransferase C.